Here is a 380-residue protein sequence, read N- to C-terminus: Cytochrome b (380 aa).

4 helical membrane-spanning segments follow: residues 34-54 (FGSL…LLAM), 78-99 (WLIR…YLHI), 114-134 (WNTG…GYVL), and 179-199 (FFAL…IHLT). Residues His84 and His98 each contribute to the heme b site. The heme b site is built by His183 and His197. His202 is an a ubiquinone binding site. The next 4 helical transmembrane spans lie at 227-247 (LKDF…ALFS), 289-309 (LGGV…PFLH), 321-341 (ISQL…WVGS), and 348-368 (FIII…ILFP).

Belongs to the cytochrome b family. The cytochrome bc1 complex contains 11 subunits: 3 respiratory subunits (MT-CYB, CYC1 and UQCRFS1), 2 core proteins (UQCRC1 and UQCRC2) and 6 low-molecular weight proteins (UQCRH/QCR6, UQCRB/QCR7, UQCRQ/QCR8, UQCR10/QCR9, UQCR11/QCR10 and a cleavage product of UQCRFS1). This cytochrome bc1 complex then forms a dimer. Requires heme b as cofactor.

It is found in the mitochondrion inner membrane. In terms of biological role, component of the ubiquinol-cytochrome c reductase complex (complex III or cytochrome b-c1 complex) that is part of the mitochondrial respiratory chain. The b-c1 complex mediates electron transfer from ubiquinol to cytochrome c. Contributes to the generation of a proton gradient across the mitochondrial membrane that is then used for ATP synthesis. The polypeptide is Cytochrome b (MT-CYB) (Pelecanoides urinatrix (Common diving petrel)).